We begin with the raw amino-acid sequence, 447 residues long: Probable glycine dehydrogenase (decarboxylating) subunit 1 (447 aa).

This sequence belongs to the GcvP family. N-terminal subunit subfamily. The glycine cleavage system is composed of four proteins: P, T, L and H. In this organism, the P 'protein' is a heterodimer of two subunits.

The enzyme catalyses N(6)-[(R)-lipoyl]-L-lysyl-[glycine-cleavage complex H protein] + glycine + H(+) = N(6)-[(R)-S(8)-aminomethyldihydrolipoyl]-L-lysyl-[glycine-cleavage complex H protein] + CO2. The glycine cleavage system catalyzes the degradation of glycine. The P protein binds the alpha-amino group of glycine through its pyridoxal phosphate cofactor; CO(2) is released and the remaining methylamine moiety is then transferred to the lipoamide cofactor of the H protein. This Bacillus cytotoxicus (strain DSM 22905 / CIP 110041 / 391-98 / NVH 391-98) protein is Probable glycine dehydrogenase (decarboxylating) subunit 1.